Reading from the N-terminus, the 250-residue chain is 1-(5-phosphoribosyl)-5-[(5-phosphoribosylamino)methylideneamino] imidazole-4-carboxamide isomerase (250 aa).

Residue Asp-10 is the Proton acceptor of the active site. Asp-131 serves as the catalytic Proton donor.

Belongs to the HisA/HisF family.

Its subcellular location is the cytoplasm. The enzyme catalyses 1-(5-phospho-beta-D-ribosyl)-5-[(5-phospho-beta-D-ribosylamino)methylideneamino]imidazole-4-carboxamide = 5-[(5-phospho-1-deoxy-D-ribulos-1-ylimino)methylamino]-1-(5-phospho-beta-D-ribosyl)imidazole-4-carboxamide. It participates in amino-acid biosynthesis; L-histidine biosynthesis; L-histidine from 5-phospho-alpha-D-ribose 1-diphosphate: step 4/9. In Desulfitobacterium hafniense (strain DSM 10664 / DCB-2), this protein is 1-(5-phosphoribosyl)-5-[(5-phosphoribosylamino)methylideneamino] imidazole-4-carboxamide isomerase.